The chain runs to 217 residues: Large ribosomal subunit protein uL3 (217 aa).

The protein belongs to the universal ribosomal protein uL3 family. Part of the 50S ribosomal subunit. Forms a cluster with proteins L14 and L19.

Its function is as follows. One of the primary rRNA binding proteins, it binds directly near the 3'-end of the 23S rRNA, where it nucleates assembly of the 50S subunit. This is Large ribosomal subunit protein uL3 from Mycolicibacterium smegmatis (strain ATCC 700084 / mc(2)155) (Mycobacterium smegmatis).